A 501-amino-acid polypeptide reads, in one-letter code: Probable malate:quinone oxidoreductase (501 aa).

This sequence belongs to the MQO family. The cofactor is FAD.

It catalyses the reaction (S)-malate + a quinone = a quinol + oxaloacetate. It participates in carbohydrate metabolism; tricarboxylic acid cycle; oxaloacetate from (S)-malate (quinone route): step 1/1. The sequence is that of Probable malate:quinone oxidoreductase from Mycolicibacterium paratuberculosis (strain ATCC BAA-968 / K-10) (Mycobacterium paratuberculosis).